The following is a 197-amino-acid chain: Adrenodoxin-like protein 2, mitochondrial (197 aa).

Residues 1–74 (MVFHRLSRLG…TSFSTTSEKG (74 aa)) constitute a mitochondrion transit peptide. In terms of domain architecture, 2Fe-2S ferredoxin-type spans 81-184 (INVTFVDKDG…GVRLAIPSAT (104 aa)). Residues Cys118, Cys124, Cys127, and Cys165 each coordinate [2Fe-2S] cluster.

It belongs to the adrenodoxin/putidaredoxin family. It depends on [2Fe-2S] cluster as a cofactor.

The protein resides in the mitochondrion. Associates with the adrenodoxin reductase MFDR to form an efficient low potential electron transfer chain that is able to reduce cytochrome C. The protein is Adrenodoxin-like protein 2, mitochondrial of Arabidopsis thaliana (Mouse-ear cress).